A 294-amino-acid chain; its full sequence is 4-hydroxy-tetrahydrodipicolinate synthase (294 aa).

Threonine 44 provides a ligand contact to pyruvate. Tyrosine 132 serves as the catalytic Proton donor/acceptor. The Schiff-base intermediate with substrate role is filled by lysine 160. Valine 202 serves as a coordination point for pyruvate.

It belongs to the DapA family. Homotetramer; dimer of dimers.

Its subcellular location is the cytoplasm. The enzyme catalyses L-aspartate 4-semialdehyde + pyruvate = (2S,4S)-4-hydroxy-2,3,4,5-tetrahydrodipicolinate + H2O + H(+). The protein operates within amino-acid biosynthesis; L-lysine biosynthesis via DAP pathway; (S)-tetrahydrodipicolinate from L-aspartate: step 3/4. Functionally, catalyzes the condensation of (S)-aspartate-beta-semialdehyde [(S)-ASA] and pyruvate to 4-hydroxy-tetrahydrodipicolinate (HTPA). The chain is 4-hydroxy-tetrahydrodipicolinate synthase from Leptospira borgpetersenii serovar Hardjo-bovis (strain L550).